A 286-amino-acid chain; its full sequence is Undecaprenyl-diphosphatase (286 aa).

The next 7 helical transmembrane spans lie at 5 to 25 (WFIIKAIIIGIVEGITEFLPV), 55 to 75 (IDAFTMIIQLGAILAIVVLYW), 92 to 112 (SGFKFWLNIAVSAVPAGVLGL), 122 to 142 (LFNPGSVTAALIVGAIWMIFA), 185 to 205 (IIGAWIVGLSTVAAAEFSFFL), 229 to 249 (MHIVGLTVGFIVSFIVALIVV), and 264 to 284 (FAMYRILLGIVLIILSLFNVI).

Belongs to the UppP family.

It localises to the cell membrane. It carries out the reaction di-trans,octa-cis-undecaprenyl diphosphate + H2O = di-trans,octa-cis-undecaprenyl phosphate + phosphate + H(+). Its function is as follows. Catalyzes the dephosphorylation of undecaprenyl diphosphate (UPP). Confers resistance to bacitracin. This is Undecaprenyl-diphosphatase from Clostridium novyi (strain NT).